The primary structure comprises 601 residues: Putative purine permease C1399.01c (601 aa).

12 consecutive transmembrane segments (helical) span residues Val-64–Val-84, Thr-102–Ala-122, Tyr-131–Ala-151, Tyr-179–Ile-199, Leu-207–Ser-227, Gly-264–Ile-284, Thr-294–Trp-314, Ile-337–Ile-357, Phe-424–Val-444, Val-450–Ile-470, Phe-481–Thr-501, and Leu-522–Leu-542.

It belongs to the nucleobase:cation symporter-2 (NCS2) (TC 2.A.40) family.

Its subcellular location is the vacuole membrane. The chain is Putative purine permease C1399.01c from Schizosaccharomyces pombe (strain 972 / ATCC 24843) (Fission yeast).